A 440-amino-acid polypeptide reads, in one-letter code: MVHGYKGVKFQNWARTYGCCPEMYFQPTSVEEVREVLALARQQNKRVKVVGGGHSPSDIACTDGFMIHMGKMNRVLKVDTEKKQVTVEAGILLADLHPQLDKHGLALSNLGAVSDVTAGGVIGSGTHNTGIKHGILATQVVALTLLTANGTILECSESSNAEVFQAARVHLGCLGVILTVTLQCVPQFHLQETTFPSTLKEVLDNLDSHLKKSEYFRFLWFPHSENVSVIYQDHTNKPPSSSANWFWDYAIGFYLLEFLLWISTFLPGLVGWINRFFFWLLFNGKKENCNLSHKIFTYECRFKQHVQDWAIPREKTKEALLELKAMLEANPKVVAHYPVEVRFTRGDDILLSPCFQRDSCYMNIIMYRPYGKDVPRLDYWLAYETIMKKVGGRPHWAKAHNCTRKDFEKMYPAFQRFCAIREKLDPTGMFLNAYLEKVFY.

Positions 17–187 (YGCCPEMYFQ…LTVTLQCVPQ (171 aa)) constitute an FAD-binding PCMH-type domain. Pros-8alpha-FAD histidine is present on His-54. The chain crosses the membrane as a helical span at residues 253 to 273 (FYLLEFLLWISTFLPGLVGWI).

Belongs to the oxygen-dependent FAD-linked oxidoreductase family. FAD serves as cofactor.

It localises to the microsome membrane. It is found in the endoplasmic reticulum membrane. The enzyme catalyses L-gulono-1,4-lactone + O2 = L-ascorbate + H2O2 + H(+). It participates in cofactor biosynthesis; L-ascorbate biosynthesis via UDP-alpha-D-glucuronate pathway; L-ascorbate from UDP-alpha-D-glucuronate: step 4/4. In terms of biological role, oxidizes L-gulono-1,4-lactone to hydrogen peroxide and L-xylo-hexulonolactone which spontaneously isomerizes to L-ascorbate. In Bos taurus (Bovine), this protein is L-gulonolactone oxidase (GULO).